Consider the following 456-residue polypeptide: Bifunctional protein GlmU (456 aa).

Positions 1-229 (MLNNAMSVVI…LSEVEGVNNR (229 aa)) are pyrophosphorylase. UDP-N-acetyl-alpha-D-glucosamine is bound by residues 11–14 (LAAG), Lys-25, Gln-76, 81–82 (GT), 103–105 (YGD), Gly-140, Glu-154, Asn-169, and Asn-227. Asp-105 contributes to the Mg(2+) binding site. A Mg(2+)-binding site is contributed by Asn-227. Residues 230 to 250 (LQLSRLERVYQSEQAEKLLLA) are linker. The N-acetyltransferase stretch occupies residues 251 to 456 (GVMLRDPARF…EGWRRPVKKK (206 aa)). Arg-333 and Lys-351 together coordinate UDP-N-acetyl-alpha-D-glucosamine. His-363 acts as the Proton acceptor in catalysis. The UDP-N-acetyl-alpha-D-glucosamine site is built by Tyr-366 and Asn-377. Residues Ala-380, 386-387 (NY), Ser-405, Ala-423, and Arg-440 each bind acetyl-CoA.

This sequence in the N-terminal section; belongs to the N-acetylglucosamine-1-phosphate uridyltransferase family. It in the C-terminal section; belongs to the transferase hexapeptide repeat family. As to quaternary structure, homotrimer. Mg(2+) is required as a cofactor.

It localises to the cytoplasm. The enzyme catalyses alpha-D-glucosamine 1-phosphate + acetyl-CoA = N-acetyl-alpha-D-glucosamine 1-phosphate + CoA + H(+). It carries out the reaction N-acetyl-alpha-D-glucosamine 1-phosphate + UTP + H(+) = UDP-N-acetyl-alpha-D-glucosamine + diphosphate. The protein operates within nucleotide-sugar biosynthesis; UDP-N-acetyl-alpha-D-glucosamine biosynthesis; N-acetyl-alpha-D-glucosamine 1-phosphate from alpha-D-glucosamine 6-phosphate (route II): step 2/2. Its pathway is nucleotide-sugar biosynthesis; UDP-N-acetyl-alpha-D-glucosamine biosynthesis; UDP-N-acetyl-alpha-D-glucosamine from N-acetyl-alpha-D-glucosamine 1-phosphate: step 1/1. It participates in bacterial outer membrane biogenesis; LPS lipid A biosynthesis. Catalyzes the last two sequential reactions in the de novo biosynthetic pathway for UDP-N-acetylglucosamine (UDP-GlcNAc). The C-terminal domain catalyzes the transfer of acetyl group from acetyl coenzyme A to glucosamine-1-phosphate (GlcN-1-P) to produce N-acetylglucosamine-1-phosphate (GlcNAc-1-P), which is converted into UDP-GlcNAc by the transfer of uridine 5-monophosphate (from uridine 5-triphosphate), a reaction catalyzed by the N-terminal domain. This Escherichia coli O81 (strain ED1a) protein is Bifunctional protein GlmU.